Reading from the N-terminus, the 917-residue chain is Protein translocase subunit SecA (917 aa).

Residues Gln87, 105–109 (GEGKT), and Asp516 contribute to the ATP site. Zn(2+) is bound by residues Cys901, Cys903, Cys912, and His913.

The protein belongs to the SecA family. In terms of assembly, monomer and homodimer. Part of the essential Sec protein translocation apparatus which comprises SecA, SecYEG and auxiliary proteins SecDF-YajC and YidC. It depends on Zn(2+) as a cofactor.

The protein resides in the cell inner membrane. The protein localises to the cytoplasm. The catalysed reaction is ATP + H2O + cellular proteinSide 1 = ADP + phosphate + cellular proteinSide 2.. Functionally, part of the Sec protein translocase complex. Interacts with the SecYEG preprotein conducting channel. Has a central role in coupling the hydrolysis of ATP to the transfer of proteins into and across the cell membrane, serving both as a receptor for the preprotein-SecB complex and as an ATP-driven molecular motor driving the stepwise translocation of polypeptide chains across the membrane. The sequence is that of Protein translocase subunit SecA from Acidovorax sp. (strain JS42).